The chain runs to 198 residues: Protein GrpE (198 aa).

Positions 1-27 (MEERNEQVVEETKEAQTEEATIEKNSE) are enriched in basic and acidic residues. The segment at 1–39 (MEERNEQVVEETKEAQTEEATIEKNSEESVTEEATEETV) is disordered. Over residues 29-39 (SVTEEATEETV) the composition is skewed to acidic residues.

The protein belongs to the GrpE family. In terms of assembly, homodimer.

The protein localises to the cytoplasm. Participates actively in the response to hyperosmotic and heat shock by preventing the aggregation of stress-denatured proteins, in association with DnaK and GrpE. It is the nucleotide exchange factor for DnaK and may function as a thermosensor. Unfolded proteins bind initially to DnaJ; upon interaction with the DnaJ-bound protein, DnaK hydrolyzes its bound ATP, resulting in the formation of a stable complex. GrpE releases ADP from DnaK; ATP binding to DnaK triggers the release of the substrate protein, thus completing the reaction cycle. Several rounds of ATP-dependent interactions between DnaJ, DnaK and GrpE are required for fully efficient folding. The sequence is that of Protein GrpE from Bacillus cytotoxicus (strain DSM 22905 / CIP 110041 / 391-98 / NVH 391-98).